Consider the following 457-residue polypeptide: Sensor protein CpxA (457 aa).

Topologically, residues 1 to 7 (MIGSLTA) are cytoplasmic. The chain crosses the membrane as a helical span at residues 8–29 (RIFAIFWLTLALVLMLVLMLPK). Residues 30–163 (LDSRQMTELL…SDFINLLFDR (134 aa)) lie on the Periplasmic side of the membrane. The helical transmembrane segment at 164–184 (PLLLLIVTMLVSTPLLLWLAW) threads the bilayer. The HAMP domain maps to 185-237 (SLAKPARKLKNAADEVAQGNLRQHPELEAGPQEFLAAGASFNQMVTALERMMT). The Cytoplasmic portion of the chain corresponds to 185–457 (SLAKPARKLK…VIWLPLYKRS (273 aa)). One can recognise a Histidine kinase domain in the interval 245–455 (DISHELRTPL…RLVIWLPLYK (211 aa)). H248 bears the Phosphohistidine; by autocatalysis mark.

Its subcellular location is the cell inner membrane. It carries out the reaction ATP + protein L-histidine = ADP + protein N-phospho-L-histidine.. Functionally, this protein is involved in several diverse cellular processes, such as the functioning of acetohydroxyacid synthetase I, in the biosynthesis of isoleucine and valine, the TraJ protein activation activity for tra gene expression in F plasmid, and the synthesis, translocation, or stability of cell envelope proteins. Activates CpxR by phosphorylation. The protein is Sensor protein CpxA (cpxA) of Escherichia coli O157:H7.